Here is a 342-residue protein sequence, read N- to C-terminus: tRNA N6-adenosine threonylcarbamoyltransferase (342 aa).

Positions 115 and 119 each coordinate Fe cation. Substrate-binding positions include 138-142 (IISGG), D171, G184, D188, and N276. Position 304 (D304) interacts with Fe cation.

This sequence belongs to the KAE1 / TsaD family. Requires Fe(2+) as cofactor.

The protein resides in the cytoplasm. The catalysed reaction is L-threonylcarbamoyladenylate + adenosine(37) in tRNA = N(6)-L-threonylcarbamoyladenosine(37) in tRNA + AMP + H(+). Its function is as follows. Required for the formation of a threonylcarbamoyl group on adenosine at position 37 (t(6)A37) in tRNAs that read codons beginning with adenine. Is involved in the transfer of the threonylcarbamoyl moiety of threonylcarbamoyl-AMP (TC-AMP) to the N6 group of A37, together with TsaE and TsaB. TsaD likely plays a direct catalytic role in this reaction. This is tRNA N6-adenosine threonylcarbamoyltransferase from Endomicrobium trichonymphae.